The chain runs to 124 residues: UPF0102 protein BL0935 (124 aa).

This sequence belongs to the UPF0102 family.

This chain is UPF0102 protein BL0935, found in Bifidobacterium longum (strain NCC 2705).